The primary structure comprises 434 residues: ATP-dependent protease ATPase subunit HslU (434 aa).

Residues valine 18, 60–65 (GVGKTE), aspartate 247, glutamate 312, and arginine 384 contribute to the ATP site.

Belongs to the ClpX chaperone family. HslU subfamily. As to quaternary structure, a double ring-shaped homohexamer of HslV is capped on each side by a ring-shaped HslU homohexamer. The assembly of the HslU/HslV complex is dependent on binding of ATP.

It localises to the cytoplasm. Functionally, ATPase subunit of a proteasome-like degradation complex; this subunit has chaperone activity. The binding of ATP and its subsequent hydrolysis by HslU are essential for unfolding of protein substrates subsequently hydrolyzed by HslV. HslU recognizes the N-terminal part of its protein substrates and unfolds these before they are guided to HslV for hydrolysis. The protein is ATP-dependent protease ATPase subunit HslU of Phenylobacterium zucineum (strain HLK1).